A 587-amino-acid polypeptide reads, in one-letter code: Chaperonin CPN60, mitochondrial (587 aa).

The N-terminal 32 residues, 1–32 (MYRLISSIASKARVARNCTSQIGSRLSSTRNY), are a transit peptide targeting the mitochondrion.

This sequence belongs to the chaperonin (HSP60) family.

Its subcellular location is the mitochondrion. In terms of biological role, implicated in mitochondrial protein import and macromolecular assembly. May facilitate the correct folding of imported proteins. May also prevent misfolding and promote the refolding and proper assembly of unfolded polypeptides generated under stress conditions in the mitochondrial matrix. This is Chaperonin CPN60, mitochondrial from Brassica napus (Rape).